Consider the following 509-residue polypeptide: Probable xyloglucan galactosyltransferase GT12 (509 aa).

At 1–3 the chain is on the cytoplasmic side; sequence MMK. A helical; Signal-anchor for type II membrane protein membrane pass occupies residues 4–24; it reads PVPKLWVVISSAFVFCLLVLF. Residues 25-509 are Lumenal-facing; it reads QINKSDLIEA…KLEIIHEKTA (485 aa). N-linked (GlcNAc...) asparagine glycosylation is found at Asn-27, Asn-59, Asn-65, Asn-169, Asn-170, Asn-195, Asn-257, and Asn-416.

This sequence belongs to the glycosyltransferase 47 family. Expressed in pollen grains.

It is found in the golgi apparatus membrane. Functions in xyloglucan synthesis by adding side chains to the xylosylated glucan backbone. Involved in the galactosylation of hemicellulose xyloglucan. The sequence is that of Probable xyloglucan galactosyltransferase GT12 from Arabidopsis thaliana (Mouse-ear cress).